Here is a 143-residue protein sequence, read N- to C-terminus: Ribonuclease P protein component 2 (143 aa).

Belongs to the eukaryotic/archaeal RNase P protein component 2 family. As to quaternary structure, consists of a catalytic RNA component and at least 4-5 protein subunits.

It localises to the cytoplasm. The catalysed reaction is Endonucleolytic cleavage of RNA, removing 5'-extranucleotides from tRNA precursor.. Part of ribonuclease P, a protein complex that generates mature tRNA molecules by cleaving their 5'-ends. The chain is Ribonuclease P protein component 2 from Saccharolobus islandicus (strain L.S.2.15 / Lassen #1) (Sulfolobus islandicus).